Consider the following 202-residue polypeptide: Ion-translocating oxidoreductase complex subunit G (202 aa).

The chain crosses the membrane as a helical span at residues 11 to 31 (ACLMGFFSFFSLSSVIFVKNI). Threonine 176 carries the post-translational modification FMN phosphoryl threonine.

Belongs to the RnfG family. The complex is composed of six subunits: RnfA, RnfB, RnfC, RnfD, RnfE and RnfG. FMN serves as cofactor.

It is found in the cell inner membrane. Functionally, part of a membrane-bound complex that couples electron transfer with translocation of ions across the membrane. In Buchnera aphidicola subsp. Schizaphis graminum (strain Sg), this protein is Ion-translocating oxidoreductase complex subunit G.